Reading from the N-terminus, the 419-residue chain is UDP-N-acetylglucosamine 1-carboxyvinyltransferase 2 (419 aa).

22–23 (KN) provides a ligand contact to phosphoenolpyruvate. Arg-92 provides a ligand contact to UDP-N-acetyl-alpha-D-glucosamine. Catalysis depends on Cys-116, which acts as the Proton donor. A 2-(S-cysteinyl)pyruvic acid O-phosphothioketal modification is found at Cys-116. Residues 121–125 (RPIDL), Asp-306, and Ile-328 contribute to the UDP-N-acetyl-alpha-D-glucosamine site.

It belongs to the EPSP synthase family. MurA subfamily.

The protein resides in the cytoplasm. It catalyses the reaction phosphoenolpyruvate + UDP-N-acetyl-alpha-D-glucosamine = UDP-N-acetyl-3-O-(1-carboxyvinyl)-alpha-D-glucosamine + phosphate. The protein operates within cell wall biogenesis; peptidoglycan biosynthesis. Cell wall formation. Adds enolpyruvyl to UDP-N-acetylglucosamine. The chain is UDP-N-acetylglucosamine 1-carboxyvinyltransferase 2 from Streptococcus pyogenes serotype M18 (strain MGAS8232).